A 55-amino-acid chain; its full sequence is Large ribosomal subunit protein bL33 (55 aa).

This sequence belongs to the bacterial ribosomal protein bL33 family.

The protein is Large ribosomal subunit protein bL33 of Burkholderia ambifaria (strain MC40-6).